We begin with the raw amino-acid sequence, 515 residues long: MNDQLTEVYASIDALIDYALAHLDLDPRNADWTRNQIFALFRLDSYPGPKTTTSAASVSDVVQDIVGSRSQAPYGEKTPDPLLAAFRAAATTAGLFKPEEGPAYADTIMGILSANPADLDDRFLLVEHRDGGMAAMQWFYDYCVANNYVKRAQLDRNPRFDSHGLTVTINLAKPEFKNMKKAAAGNAVAGGYPKCTICHENEGFAGRDKRTLRTLPVTLGGESWFWQFSPYGYFDQHGICVNTDHTPMHVDRDTFGHLLDFVDRFPGYFLGCNAALPRIGGSVLAHDHYQGGGELLPMHKAATWAAFTLADYPDAVVEILDWPGTAVRVVSKSRQSIIDVSDIIREAWVGYDDAANGIASHDADGNRQSALSPSAIITERGYEMSLIFRNNAISDEYPEGIFHAHPEYWPVKQEPIGLIEAQGLFILPGRLVDQLGIVEEALAEGRDLPDEVSEFSLEWGELAETLAGNHDREAIRQAVHDELGSVCYRILGNTAVFKQKATTQTFLESLGFAAR.

It belongs to the galactose-1-phosphate uridylyltransferase type 2 family.

It localises to the cytoplasm. The catalysed reaction is alpha-D-galactose 1-phosphate + UDP-alpha-D-glucose = alpha-D-glucose 1-phosphate + UDP-alpha-D-galactose. It functions in the pathway carbohydrate metabolism; galactose metabolism. Its function is as follows. Transfers the UMP unit from UDP-glucose (UDP-Glc) to Gal1P. Can also transfer the UMP unit to GlcNAc1P and GalNAc1P. Involved in the general galactose metabolism, and also involved in the lacto-N-biose I/galacto-N-biose (LNB/GNB) degradation pathway, which is important for host intestinal colonization by bifidobacteria. This chain is Galactose-1-phosphate uridylyltransferase, found in Bifidobacterium longum subsp. longum (strain ATCC 15707 / DSM 20219 / JCM 1217 / NCTC 11818 / E194b).